Here is a 471-residue protein sequence, read N- to C-terminus: ATP synthase subunit beta (471 aa).

156–163 (GGAGVGKT) contacts ATP.

It belongs to the ATPase alpha/beta chains family. As to quaternary structure, F-type ATPases have 2 components, CF(1) - the catalytic core - and CF(0) - the membrane proton channel. CF(1) has five subunits: alpha(3), beta(3), gamma(1), delta(1), epsilon(1). CF(0) has three main subunits: a(1), b(2) and c(9-12). The alpha and beta chains form an alternating ring which encloses part of the gamma chain. CF(1) is attached to CF(0) by a central stalk formed by the gamma and epsilon chains, while a peripheral stalk is formed by the delta and b chains.

It localises to the cell membrane. The catalysed reaction is ATP + H2O + 4 H(+)(in) = ADP + phosphate + 5 H(+)(out). Functionally, produces ATP from ADP in the presence of a proton gradient across the membrane. The catalytic sites are hosted primarily by the beta subunits. The polypeptide is ATP synthase subunit beta (Staphylococcus carnosus (strain TM300)).